Reading from the N-terminus, the 200-residue chain is Imidazoleglycerol-phosphate dehydratase (200 aa).

Substrate contacts are provided by residues Glu-13, 39–47 (HMLTLLTFH), 68–72 (HHLIE), Arg-94, and Arg-116. Positions 39, 68, 69, and 72 each coordinate Mn(2+). Positions 141, 165, 166, and 169 each coordinate Mn(2+). Residues 165 to 173 (HHIIEGMFK) and 195 to 197 (SSK) each bind substrate.

This sequence belongs to the imidazoleglycerol-phosphate dehydratase family. Mn(2+) serves as cofactor.

Its subcellular location is the cytoplasm. The catalysed reaction is D-erythro-1-(imidazol-4-yl)glycerol 3-phosphate = 3-(imidazol-4-yl)-2-oxopropyl phosphate + H2O. It participates in amino-acid biosynthesis; L-histidine biosynthesis; L-histidine from 5-phospho-alpha-D-ribose 1-diphosphate: step 6/9. This chain is Imidazoleglycerol-phosphate dehydratase (hisB), found in Lactococcus lactis subsp. lactis (strain IL1403) (Streptococcus lactis).